A 91-amino-acid polypeptide reads, in one-letter code: Co-chaperonin GroES (91 aa).

Belongs to the GroES chaperonin family. In terms of assembly, heptamer of 7 subunits arranged in a ring. Interacts with the chaperonin GroEL.

Its subcellular location is the cytoplasm. In terms of biological role, together with the chaperonin GroEL, plays an essential role in assisting protein folding. The GroEL-GroES system forms a nano-cage that allows encapsulation of the non-native substrate proteins and provides a physical environment optimized to promote and accelerate protein folding. GroES binds to the apical surface of the GroEL ring, thereby capping the opening of the GroEL channel. This chain is Co-chaperonin GroES, found in Oenococcus oeni (strain ATCC BAA-331 / PSU-1).